A 605-amino-acid chain; its full sequence is E3 ubiquitin-protein ligase synoviolin A (605 aa).

The helical transmembrane segment at M1–L19 threads the bilayer. The Lumenal segment spans residues K20 to P35. Residues S36–G56 form a helical membrane-spanning segment. Over K57 to D92 the chain is Cytoplasmic. A helical membrane pass occupies residues F93–L113. The Lumenal portion of the chain corresponds to A114–W129. The chain crosses the membrane as a helical span at residues L130 to V150. The Cytoplasmic segment spans residues S151–S163. A helical transmembrane segment spans residues V164–I184. The Lumenal segment spans residues K185–V218. The chain crosses the membrane as a helical span at residues L219 to I239. Residues K230 to R264 form an interaction with p53/TP53 region. Residues R240–Q605 are Cytoplasmic-facing. Zn(2+) is bound by residues C285, C288, C301, H303, H306, C309, C320, and C323. An RING-type; atypical zinc finger spans residues C285–R324. Residues T334–T355 show a composition bias toward low complexity. Residues T334 to P433 form a disordered region. The span at P356 to G391 shows a compositional bias: pro residues. Over residues P403–G414 the composition is skewed to low complexity. Positions E415 to Q424 are enriched in polar residues. Residues E465 to M496 adopt a coiled-coil conformation. The segment at Q513 to Q605 is disordered. Residues I516 to S539 are compositionally biased toward low complexity. The segment covering D546–E555 has biased composition (polar residues). The span at S556 to T579 shows a compositional bias: low complexity.

It belongs to the HRD1 family. In terms of assembly, homodimer.

The protein resides in the endoplasmic reticulum membrane. It carries out the reaction S-ubiquitinyl-[E2 ubiquitin-conjugating enzyme]-L-cysteine + [acceptor protein]-L-lysine = [E2 ubiquitin-conjugating enzyme]-L-cysteine + N(6)-ubiquitinyl-[acceptor protein]-L-lysine.. The protein operates within protein modification; protein ubiquitination. Its function is as follows. E3 ubiquitin-protein ligase which accepts ubiquitin specifically from endoplasmic reticulum-associated UBC7 E2 ligase and transfers it to substrates, promoting their degradation. Component of the endoplasmic reticulum quality control (ERQC) system also called ER-associated degradation (ERAD) involved in ubiquitin-dependent degradation of misfolded endoplasmic reticulum proteins. Also promotes the degradation of normal but naturally short-lived proteins. Protects cells from ER stress-induced apoptosis. Sequesters p53 in the cytoplasm and promotes its degradation, thereby negatively regulating its biological function in transcription, cell cycle regulation and apoptosis. This Xenopus laevis (African clawed frog) protein is E3 ubiquitin-protein ligase synoviolin A (syvn1-a).